A 587-amino-acid polypeptide reads, in one-letter code: General negative regulator of transcription subunit 4 (587 aa).

Residues 33 to 78 form an RING-type zinc finger; sequence CPLCIEPMDITDKNFFPCPCGYQICQFCYNNIRQNPELNGRCPACR. The stretch at 94–128 forms a coiled coil; it reads EELKMERAKLARKEKERKHREKERKENEYTNRKHL. The RRM domain maps to 137–228; sequence NLVYVVGINP…YMDGRLIKAA (92 aa). The C3H1-type zinc finger occupies 229–256; the sequence is YGTTKYCSSYLRGLPCPNPNCMFLHEPG. Lysine 270 participates in a covalent cross-link: Glycyl lysine isopeptide (Lys-Gly) (interchain with G-Cter in ubiquitin). The residue at position 310 (threonine 310) is a Phosphothreonine. Serine 312 bears the Phosphoserine mark. Threonine 326 bears the Phosphothreonine mark. At serine 360 the chain carries Phosphoserine. The disordered stretch occupies residues 370 to 412; that stretch reads TLNDSLGHHTTPTTENTITSTTTTTNTNATSHSHGSKKKQSLA. Residues 377-402 are compositionally biased toward low complexity; that stretch reads HHTTPTTENTITSTTTTTNTNATSHS.

As to quaternary structure, forms a NOT protein complex that comprises NOT1, NOT2, NOT3, NOT4 and NOT5. Subunit of the 1.0 MDa CCR4-NOT core complex that contains CCR4, CAF1, NOT1, NOT2, NOT3, NOT4, NOT5, CAF40 and CAF130. In the complex interacts with NOT1. The core complex probably is part of a less characterized 1.9 MDa CCR4-NOT complex.

It is found in the cytoplasm. The protein localises to the nucleus. The enzyme catalyses S-ubiquitinyl-[E2 ubiquitin-conjugating enzyme]-L-cysteine + [acceptor protein]-L-lysine = [E2 ubiquitin-conjugating enzyme]-L-cysteine + N(6)-ubiquitinyl-[acceptor protein]-L-lysine.. Its pathway is protein modification; protein ubiquitination. Its function is as follows. E3 ubiquitin-protein ligase component of the CCR4-NOT core complex, which in the nucleus seems to be a general transcription factor, and in the cytoplasm the major mRNA deadenylase involved in mRNA turnover. The NOT protein subcomplex negatively regulates the basal and activated transcription of many genes. Preferentially affects TC-type TATA element-dependent transcription. Could directly or indirectly inhibit component(s) of the general transcription machinery. In the cytoplasm, catalyzes monoubiquitination of RPS7/es7 in response to stalled ribosomes, initiating a HEL2-dependent response that activates the No-Go Decay (NGD) pathway. The polypeptide is General negative regulator of transcription subunit 4 (MOT2) (Saccharomyces cerevisiae (strain ATCC 204508 / S288c) (Baker's yeast)).